The chain runs to 288 residues: Rhox homeobox family member 2 (288 aa).

Positions 16–136 (SPAVDDEKEL…GLEPGNAQQP (121 aa)) are disordered. Residues 39–48 (VKEEEEDAQP) show a composition bias toward acidic residues. The segment covering 68 to 80 (GEEKDGGGEEKDG) has biased composition (basic and acidic residues). Positions 134–193 (QQPNVHAFTPLQLQELERIFQREQFPSEFLRRRLARSMNVTELAVQIWFENRRAKWRRHQ) form a DNA-binding region, homeobox. A Nuclear localization signal motif is present at residues 186–195 (RAKWRRHQRA).

This sequence belongs to the paired-like homeobox family. PEPP subfamily. Testis. Not detected in epididymis nor placenta. In testis, mainly expressed in germ cells, but also detected in somatic cells such as Sertoli cells, Leydig cells and peritubular cells.

It localises to the nucleus. Functionally, transcription factor maybe involved in reproductive processes. Modulates expression of target genes encoding proteins involved in processes relevant to spermatogenesis. The polypeptide is Rhox homeobox family member 2 (Homo sapiens (Human)).